Consider the following 31-residue polypeptide: Superoxide dismutase [Cu-Zn] (31 aa).

Belongs to the Cu-Zn superoxide dismutase family. Cu cation serves as cofactor. It depends on Zn(2+) as a cofactor.

It localises to the cytoplasm. It carries out the reaction 2 superoxide + 2 H(+) = H2O2 + O2. Its function is as follows. Destroys radicals which are normally produced within the cells and which are toxic to biological systems. The polypeptide is Superoxide dismutase [Cu-Zn] (Striga hermonthica (Purple witchweed)).